Reading from the N-terminus, the 331-residue chain is Aromatic 2-oxoacid reductase (331 aa).

NAD(+) is bound by residues 154 to 155 (RI), Asp-175, 205 to 206 (AP), Asn-211, 232 to 234 (AAR), and Asp-258. Residue Arg-234 is part of the active site. Glu-263 is an active-site residue. The active-site Proton donor is the His-295.

The protein belongs to the D-isomer specific 2-hydroxyacid dehydrogenase family.

It catalyses the reaction (R)-3-phenyllactate + NAD(+) = 3-phenylpyruvate + NADH + H(+). The enzyme catalyses (2R)-2-hydroxy-3-(4-hydroxyphenyl)propanoate + NAD(+) = 3-(4-hydroxyphenyl)pyruvate + NADH + H(+). It carries out the reaction 3-(indol-3-yl)lactate + NAD(+) = indole-3-pyruvate + NADH + H(+). It participates in amino-acid degradation. Functionally, essential for the reductive metabolism of L-phenylalanine, L-tyrosine and L-tryptophan. Catalyzes the conversion of phenylpyruvic acid to phenyllactic acid, 4-hydroxy-phenylpyruvic acid to 4-hydroxy-phenyllactic acid, and indolepyruvic acid to indolelactic acid. This is Aromatic 2-oxoacid reductase from Clostridium sporogenes (strain ATCC 15579).